The sequence spans 357 residues: DNA polymerase IV (357 aa).

In terms of domain architecture, UmuC spans 4-185; it reads IIHVDMDCYF…LSLRQIPGVG (182 aa). Residues Asp8 and Asp103 each coordinate Mg(2+). The active site involves Glu104.

Belongs to the DNA polymerase type-Y family. Monomer. Requires Mg(2+) as cofactor.

It localises to the cytoplasm. It carries out the reaction DNA(n) + a 2'-deoxyribonucleoside 5'-triphosphate = DNA(n+1) + diphosphate. Poorly processive, error-prone DNA polymerase involved in untargeted mutagenesis. Copies undamaged DNA at stalled replication forks, which arise in vivo from mismatched or misaligned primer ends. These misaligned primers can be extended by PolIV. Exhibits no 3'-5' exonuclease (proofreading) activity. May be involved in translesional synthesis, in conjunction with the beta clamp from PolIII. The sequence is that of DNA polymerase IV from Shewanella oneidensis (strain ATCC 700550 / JCM 31522 / CIP 106686 / LMG 19005 / NCIMB 14063 / MR-1).